A 1324-amino-acid chain; its full sequence is Probable phosphoribosylformylglycinamidine synthase (1324 aa).

Residues 314 to 325 (GATTGTGGRIRD), 394 to 396 (SGF), and A681 contribute to the ATP site. The Mg(2+) site is built by D682, E721, N725, and D894. Position 896 (S896) interacts with ATP. The 243-residue stretch at 1053-1295 (RVAIIREEGS…LTWQWAESSE (243 aa)) folds into the Glutamine amidotransferase type-1 domain. C1146 serves as the catalytic Nucleophile. Active-site residues include H1280 and D1282.

This sequence in the N-terminal section; belongs to the FGAMS family.

The protein localises to the cytoplasm. The enzyme catalyses N(2)-formyl-N(1)-(5-phospho-beta-D-ribosyl)glycinamide + L-glutamine + ATP + H2O = 2-formamido-N(1)-(5-O-phospho-beta-D-ribosyl)acetamidine + L-glutamate + ADP + phosphate + H(+). It participates in purine metabolism; IMP biosynthesis via de novo pathway; 5-amino-1-(5-phospho-D-ribosyl)imidazole from N(2)-formyl-N(1)-(5-phospho-D-ribosyl)glycinamide: step 1/2. Its function is as follows. Phosphoribosylformylglycinamidine synthase involved in the purines biosynthetic pathway. Catalyzes the ATP-dependent conversion of formylglycinamide ribonucleotide (FGAR) and glutamine to yield formylglycinamidine ribonucleotide (FGAM) and glutamate. This Caenorhabditis elegans protein is Probable phosphoribosylformylglycinamidine synthase.